Here is a 2319-residue protein sequence, read N- to C-terminus: Neurogenic locus notch homolog protein 3 (2319 aa).

Over residues 1–14 (MGPGARGRRRRRRL) the composition is skewed to basic residues. A disordered region spans residues 1–20 (MGPGARGRRRRRRLMALPPP). Positions 1-40 (MGPGARGRRRRRRLMALPPPPPPMRALPLLLLLLAGLGAA) are cleaved as a signal peptide. 3 consecutive EGF-like domains span residues 41–79 (APPCLDGSPCANGGRCTHQQPSREAACLCLPGWVGERCQ), 80–120 (LEDP…PDCS), and 121–158 (LPDPCFSSPCAHGAPCSVGSDGRYACACPPGYQGRNCR). Residues 41–1645 (APPCLDGSPC…LEPPEQSVPL (1605 aa)) are Extracellular-facing. Intrachain disulfides connect Cys-44-Cys-56, Cys-50-Cys-67, Cys-69-Cys-78, Cys-84-Cys-95, Cys-89-Cys-108, Cys-110-Cys-119, Cys-125-Cys-136, Cys-130-Cys-146, Cys-148-Cys-157, Cys-164-Cys-176, Cys-170-Cys-185, Cys-187-Cys-196, Cys-203-Cys-214, Cys-208-Cys-224, Cys-226-Cys-235, Cys-242-Cys-253, Cys-247-Cys-262, Cys-264-Cys-273, Cys-280-Cys-293, Cys-287-Cys-302, Cys-304-Cys-313, Cys-320-Cys-331, Cys-325-Cys-340, Cys-342-Cys-351, Cys-357-Cys-368, Cys-362-Cys-379, Cys-381-Cys-390, Cys-397-Cys-410, Cys-404-Cys-419, Cys-421-Cys-430, Cys-437-Cys-448, Cys-442-Cys-457, Cys-459-Cys-468, Cys-475-Cys-486, Cys-480-Cys-495, Cys-497-Cys-506, Cys-513-Cys-524, Cys-518-Cys-533, Cys-535-Cys-544, Cys-551-Cys-561, Cys-556-Cys-570, Cys-572-Cys-581, Cys-588-Cys-599, Cys-593-Cys-608, Cys-610-Cys-619, Cys-626-Cys-636, Cys-631-Cys-645, Cys-647-Cys-656, Cys-663-Cys-674, Cys-668-Cys-683, Cys-685-Cys-694, Cys-701-Cys-711, Cys-706-Cys-720, Cys-722-Cys-731, Cys-740-Cys-751, Cys-745-Cys-760, Cys-762-Cys-771, Cys-777-Cys-788, Cys-782-Cys-798, Cys-800-Cys-809, Cys-816-Cys-828, Cys-822-Cys-837, Cys-839-Cys-848, Cys-855-Cys-866, Cys-860-Cys-875, Cys-877-Cys-886, Cys-893-Cys-903, Cys-898-Cys-912, Cys-914-Cys-923, Cys-930-Cys-941, Cys-935-Cys-950, Cys-952-Cys-961, Cys-968-Cys-979, Cys-973-Cys-988, Cys-990-Cys-999, Cys-1006-Cys-1017, Cys-1011-Cys-1024, Cys-1026-Cys-1035, Cys-1042-Cys-1063, Cys-1057-Cys-1072, Cys-1074-Cys-1083, Cys-1090-Cys-1101, Cys-1095-Cys-1110, Cys-1112-Cys-1121, Cys-1128-Cys-1139, Cys-1133-Cys-1148, Cys-1150-Cys-1159, Cys-1166-Cys-1184, Cys-1178-Cys-1193, Cys-1195-Cys-1204, Cys-1211-Cys-1224, Cys-1216-Cys-1234, Cys-1236-Cys-1245, Cys-1252-Cys-1263, Cys-1257-Cys-1277, Cys-1279-Cys-1288, Cys-1295-Cys-1306, Cys-1300-Cys-1315, and Cys-1317-Cys-1326. Residues 160–197 (DIDECRAGASCRHGGTCINTPGSFHCLCPLGYTGLLCE) enclose the EGF-like 4; calcium-binding domain. The 38-residue stretch at 199 to 236 (PIVPCAPSPCRNGGTCRQSSDVTYDCACLPGFEGQNCE) folds into the EGF-like 5 domain. The EGF-like 6; calcium-binding domain occupies 238–274 (NVDDCPGHRCLNGGTCVDGVNTYNCQCPPEWTGQFCT). An EGF-like 7 domain is found at 276–314 (DVDECQLQPNACHNGGTCFNLLGGHSCVCVNGWTGESCS). The 37-residue stretch at 316–352 (NIDDCATAVCFHGATCHDRVASFYCACPMGKTGLLCH) folds into the EGF-like 8; calcium-binding domain. The 39-residue stretch at 353 to 391 (LDDACVSNPCHEDAICDTNPVSGRAICTCPPGFTGGACD) folds into the EGF-like 9 domain. Residues 393 to 431 (DVDECSIGANPCEHLGRCVNTQGSFLCQCGRGYTGPRCE) form the EGF-like 10; calcium-binding domain. Residues 433-469 (DVNECLSGPCRNQATCLDRIGQFTCICMAGFTGTFCE) form the EGF-like 11; calcium-binding domain. Residues 471–507 (DIDECQSSPCVNGGVCKDRVNGFSCTCPSGFSGSTCQ) enclose the EGF-like 12; calcium-binding domain. The EGF-like 13; calcium-binding domain maps to 509–545 (DVDECASTPCRNGAKCVDQPDGYECRCAEGFEGTLCE). The EGF-like 14; calcium-binding domain maps to 547–582 (NVDDCSPDPCHHGRCVDGIASFSCACAPGYTGIRCE). Residues 584–620 (QVDECRSQPCRYGGKCLDLVDKYLCRCPPGTTGVNCE) form the EGF-like 15; calcium-binding domain. The region spanning 622 to 657 (NIDDCASNPCTFGVCRDGINRYDCVCQPGFTGPLCN) is the EGF-like 16; calcium-binding domain. Residues 659 to 695 (EINECASSPCGEGGSCVDGENGFHCLCPPGSLPPLCL) form the EGF-like 17; calcium-binding domain. EGF-like domains lie at 697 to 732 (ANHPCAHKPCSHGVCHDAPGGFQCVCDPGWSGPRCS), 736 to 772 (APDACESQPCQAGGTCTSDGIGFHCTCAPGFQGHQCE), and 773 to 810 (VLSPCTPSLCEHGGHCESDPDQLTVCSCPPGWQGPRCQ). Positions 812-849 (DVDECAGASPCGPHGTCTNLPGSFRCICHGGYTGPFCD) constitute an EGF-like 21; calcium-binding domain. In terms of domain architecture, EGF-like 22; calcium-binding spans 851–887 (DIDDCDPNPCLNGGSCQDGVGSFSCSCLSGFAGPRCA). One can recognise an EGF-like 23; calcium-binding domain in the interval 889-924 (DVDECLSSPCGPGTCTDHVASFTCTCPPGYGGFHCE). 5 EGF-like domains span residues 926–962 (DLLDCSPSSCFNGGTCVDGVNSFSCLCRPGYTGTHCQ), 964–1000 (KVDPCFSRPCLHGGICNPTHSGFECTCREGFTGNQCQ), 1002–1036 (PVDWCSQAPCQNGGRCVQTGAYCICPPEWSGPLCD), 1038–1084 (PSLP…SHCE), and 1086–1122 (EVDPCTAQPCQHGGTCRGYMGGYVCECPTGYSGDSCE). The region spanning 1124–1160 (DVDECASQPCQNGGSCIDLVAHYLCSCPPGTLGVLCE) is the EGF-like 29; calcium-binding domain. Residues 1162–1205 (NEDDCGPGPSLDSGLRCLHNGTCVDLVGGFRCNCPPGYTGLHCE) form the EGF-like 30; calcium-binding domain. Asn-1181 is a glycosylation site (N-linked (GlcNAc...) asparagine). 4 EGF-like domains span residues 1207–1246 (DINECRPGTCHAAHTRDCLQDPGGHFRCICLPGFTGPRCQ), 1248–1289 (ALFP…LRCE), 1291–1327 (VARSCRELQCPVGIPCQQTARGPRCACPPGLSGPSCR), and 1337–1375 (TNTSCAATPCLHGGSCLPVQSVPFFRCVCAPGWGGPRCE). A glycan (N-linked (GlcNAc...) asparagine) is linked at Asn-1338. Intrachain disulfides connect Cys-1341–Cys-1352, Cys-1346–Cys-1363, Cys-1365–Cys-1374, Cys-1389–Cys-1412, Cys-1394–Cys-1407, Cys-1403–Cys-1419, Cys-1430–Cys-1453, Cys-1435–Cys-1448, Cys-1444–Cys-1460, Cys-1469–Cys-1495, Cys-1477–Cys-1490, and Cys-1486–Cys-1502. LNR repeat units follow at residues 1389 to 1429 (CPRA…PWRQ), 1430 to 1467 (CEALQCWRLFNNSRCDPACSSPACLYDNFDCYSGGRDR), and 1469 to 1507 (CNPVYKKYCADHFADGRCDQGCNTEECGWDGLDCASEVP). The N-linked (GlcNAc...) asparagine glycan is linked to Asn-1440. Residues 1646 to 1666 (LPLLVAGAVFLLVIFVLGVMV) traverse the membrane as a helical segment. At 1667–2319 (ARRKREHSTL…EVTPKRQVMA (653 aa)) the chain is on the cytoplasmic side. ANK repeat units follow at residues 1840 to 1869 (TGETALHLAARYARADAAKRLLDAGADTNA), 1873 to 1903 (SGRTPLHTAVTADAQGVFQILIRNRSTDLDA), 1907 to 1936 (DGSTALILAARLAVEGMVEELIASHADVNA), 1940 to 1969 (LGKSALHWAAAVNNVEATLALLKNGANKDM), and 1973 to 2002 (KEETPLFLAAREGSYEAAKLLLDHFANREI). 2 disordered regions span residues 2026-2046 (LDQPSGPRSPSGPHGLGPLLC) and 2059-2129 (QSGT…EGPY). Residues 2029–2046 (PSGPRSPSGPHGLGPLLC) are compositionally biased toward low complexity. Arg-2175 is subject to Omega-N-methylarginine. The interval 2197–2319 (LNPATPVSPH…EVTPKRQVMA (123 aa)) is disordered. The segment covering 2263-2288 (SLSDWSDSTPSPATATSATAAGALPA) has biased composition (low complexity). Polar residues predominate over residues 2297 to 2306 (SLPQSQTQLG).

It belongs to the NOTCH family. Heterodimer of a C-terminal fragment N(TM) and a N-terminal fragment N(EC) which are probably linked by disulfide bonds. Interacts with MAML1, MAML2 and MAML3 which act as transcriptional coactivators for NOTCH3. Interacts with PSMA1. Interacts with HIF1AN. In terms of processing, synthesized in the endoplasmic reticulum as an inactive form which is proteolytically cleaved by a furin-like convertase in the trans-Golgi network before it reaches the plasma membrane to yield an active, ligand-accessible form. Cleavage results in a C-terminal fragment N(TM) and a N-terminal fragment N(EC). Following ligand binding, it is cleaved by TNF-alpha converting enzyme (TACE) to yield a membrane-associated intermediate fragment called notch extracellular truncation (NEXT). This fragment is then cleaved by presenilin dependent gamma-secretase to release a notch-derived peptide containing the intracellular domain (NICD) from the membrane. Post-translationally, phosphorylated. Hydroxylated by HIF1AN. Expressed in postnatal central nervous system (CNS) germinal zones and, in early postnatal life, within numerous cells throughout the CNS. It is more highly localized to ventricular germinal zones.

Its subcellular location is the cell membrane. The protein resides in the nucleus. Functionally, functions as a receptor for membrane-bound ligands Jagged1, Jagged2 and Delta1 to regulate cell-fate determination. Upon ligand activation through the released notch intracellular domain (NICD) it forms a transcriptional activator complex with RBPJ/RBPSUH and activates genes of the enhancer of split locus. Affects the implementation of differentiation, proliferation and apoptotic programs. Acts instructively to control the cell fate determination of CNS multipotent progenitor cells, resulting in astroglial induction and neuron/oligodendrocyte suppression. In Rattus norvegicus (Rat), this protein is Neurogenic locus notch homolog protein 3 (Notch3).